The primary structure comprises 388 residues: S-adenosylmethionine synthase (388 aa).

ATP is bound at residue H16. Position 18 (D18) interacts with Mg(2+). E44 lines the K(+) pocket. E57 and Q100 together coordinate L-methionine. A flexible loop region spans residues 100–110; that stretch reads QSPDIAQGVNE. Residues 167 to 169, 233 to 234, D242, 248 to 249, and K269 each bind ATP; these read DGK, RF, and RK. D242 contacts L-methionine. K273 contributes to the L-methionine binding site.

It belongs to the AdoMet synthase family. Homotetramer; dimer of dimers. Mg(2+) serves as cofactor. The cofactor is K(+).

Its subcellular location is the cytoplasm. The enzyme catalyses L-methionine + ATP + H2O = S-adenosyl-L-methionine + phosphate + diphosphate. It participates in amino-acid biosynthesis; S-adenosyl-L-methionine biosynthesis; S-adenosyl-L-methionine from L-methionine: step 1/1. In terms of biological role, catalyzes the formation of S-adenosylmethionine (AdoMet) from methionine and ATP. The overall synthetic reaction is composed of two sequential steps, AdoMet formation and the subsequent tripolyphosphate hydrolysis which occurs prior to release of AdoMet from the enzyme. In Desulfosudis oleivorans (strain DSM 6200 / JCM 39069 / Hxd3) (Desulfococcus oleovorans), this protein is S-adenosylmethionine synthase.